A 267-amino-acid polypeptide reads, in one-letter code: Hydroxyethylthiazole kinase 2 (267 aa).

A substrate-binding site is contributed by Met41. Residues Lys116 and Thr166 each coordinate ATP. Residue Gly193 participates in substrate binding.

Belongs to the Thz kinase family. The cofactor is Mg(2+).

It catalyses the reaction 5-(2-hydroxyethyl)-4-methylthiazole + ATP = 4-methyl-5-(2-phosphooxyethyl)-thiazole + ADP + H(+). Its pathway is cofactor biosynthesis; thiamine diphosphate biosynthesis; 4-methyl-5-(2-phosphoethyl)-thiazole from 5-(2-hydroxyethyl)-4-methylthiazole: step 1/1. Functionally, catalyzes the phosphorylation of the hydroxyl group of 4-methyl-5-beta-hydroxyethylthiazole (THZ). In Streptococcus pneumoniae (strain 70585), this protein is Hydroxyethylthiazole kinase 2.